Here is a 153-residue protein sequence, read N- to C-terminus: uncharacterized protein (153 aa).

The tract at residues 1–88 (MDKDRPGLPA…VPPPQLDHPG (88 aa)) is disordered.

This is an uncharacterized protein from Epstein-Barr virus (strain P3HR-1) (HHV-4).